We begin with the raw amino-acid sequence, 249 residues long: Hydroxyacylglutathione hydrolase (249 aa).

Zn(2+) contacts are provided by H54, H56, D58, H59, H113, D138, and H176.

It belongs to the metallo-beta-lactamase superfamily. Glyoxalase II family. Monomer. Zn(2+) serves as cofactor.

The catalysed reaction is an S-(2-hydroxyacyl)glutathione + H2O = a 2-hydroxy carboxylate + glutathione + H(+). It participates in secondary metabolite metabolism; methylglyoxal degradation; (R)-lactate from methylglyoxal: step 2/2. In terms of biological role, thiolesterase that catalyzes the hydrolysis of S-D-lactoyl-glutathione to form glutathione and D-lactic acid. This is Hydroxyacylglutathione hydrolase from Parasynechococcus marenigrum (strain WH8102).